The sequence spans 185 residues: MINEIKKDAQERMEKSVEALKNGLSKIRTGRAHPSLLTGISVDYYGAPTPLNQVANVIAEDARTLAITVFDRELTQKVEKAILMSDLGLNPMSAGTIIRVPLPPLTEERRRDLVKIVRGEAEGGRVAVRNIRRDANNDLKALLKDKEISEDDERRAQEEIQKLTDAAVKKIDDVLAAKEKELMEV.

This sequence belongs to the RRF family.

Its subcellular location is the cytoplasm. In terms of biological role, responsible for the release of ribosomes from messenger RNA at the termination of protein biosynthesis. May increase the efficiency of translation by recycling ribosomes from one round of translation to another. The chain is Ribosome-recycling factor from Vibrio cholerae serotype O1 (strain ATCC 39541 / Classical Ogawa 395 / O395).